The primary structure comprises 447 residues: Glutamate-1-semialdehyde 2,1-aminomutase (447 aa).

At K277 the chain carries N6-(pyridoxal phosphate)lysine.

This sequence belongs to the class-III pyridoxal-phosphate-dependent aminotransferase family. HemL subfamily. In terms of assembly, homodimer. Pyridoxal 5'-phosphate is required as a cofactor.

Its subcellular location is the cytoplasm. The enzyme catalyses (S)-4-amino-5-oxopentanoate = 5-aminolevulinate. It participates in porphyrin-containing compound metabolism; protoporphyrin-IX biosynthesis; 5-aminolevulinate from L-glutamyl-tRNA(Glu): step 2/2. This is Glutamate-1-semialdehyde 2,1-aminomutase from Arthrobacter sp. (strain FB24).